The following is a 266-amino-acid chain: MERRELCASLLAGGAAGMSVDLILFPLDTIKTRLQSPLGFSKSGGFRGIYAGVPSTAVGSFPNAAAFFVTYESAKRFLGSDSSYLSPIIHMAAAFLGELVACLIRVPSEVIKQRAQVSPSSTTYQMLSVTLREEGIKGLYRGYKSTVLREIPFSLVQFPLWEFLKNLWSWKQGRAVDCWQSAVCGAFAGGFAAAVTTPLDVAKTRIMLAKAGSGVANGNVLFALHEIWRTQGIMGLFAGVIPRMTMISLGGFIFLGAYDKVRSSLL.

Solcar repeat units follow at residues 4 to 77 (RELC…AKRF), 85 to 167 (LSPI…LKNL), and 176 to 264 (VDCW…VRSS). Helical transmembrane passes span 5–25 (ELCASLLAGGAAGMSVDLILF), 49–69 (IYAGVPSTAVGSFPNAAAFFV), 84–104 (YLSPIIHMAAAFLGELVACLI), 141–161 (RGYKSTVLREIPFSLVQFPLW), 181–201 (SAVCGAFAGGFAAAVTTPLDV), and 237–257 (FAGVIPRMTMISLGGFIFLGA).

It belongs to the mitochondrial carrier (TC 2.A.29) family.

It localises to the mitochondrion inner membrane. The catalysed reaction is S-adenosyl-L-homocysteine(out) + S-adenosyl-L-methionine(in) = S-adenosyl-L-homocysteine(in) + S-adenosyl-L-methionine(out). In terms of biological role, mitochondrial S-adenosyl-L-methionine/S-adenosyl-L-homocysteine antiporter. Mediates the exchange of cytosolic S-adenosyl-L-methionine, the predominant methyl-group donor for macromolecule methylation processes, for mitochondrial S-adenosylhomocysteine(SAH), a by-product of methylation reactions. The polypeptide is Mitochondrial S-adenosylmethionine carrier protein (slc25a26) (Xenopus laevis (African clawed frog)).